The chain runs to 206 residues: Dephospho-CoA kinase (206 aa).

The DPCK domain occupies 4 to 200 (TVALTGGIGS…ASYLKLASQF (197 aa)). Position 12–17 (12–17 (GSGKST)) interacts with ATP.

This sequence belongs to the CoaE family.

The protein resides in the cytoplasm. The enzyme catalyses 3'-dephospho-CoA + ATP = ADP + CoA + H(+). It functions in the pathway cofactor biosynthesis; coenzyme A biosynthesis; CoA from (R)-pantothenate: step 5/5. In terms of biological role, catalyzes the phosphorylation of the 3'-hydroxyl group of dephosphocoenzyme A to form coenzyme A. In Salmonella typhimurium (strain LT2 / SGSC1412 / ATCC 700720), this protein is Dephospho-CoA kinase.